The following is a 271-amino-acid chain: DNA repair protein RecO (271 aa).

Positions 249–264 (VRVEDSVRQDGDRDST) are enriched in basic and acidic residues. Positions 249 to 271 (VRVEDSVRQDGDRDSTTRTSSPA) are disordered.

Belongs to the RecO family.

In terms of biological role, involved in DNA repair and RecF pathway recombination. The chain is DNA repair protein RecO from Rhodococcus jostii (strain RHA1).